A 344-amino-acid polypeptide reads, in one-letter code: Oxygen sensor histidine kinase NreB (344 aa).

C58, C61, C73, and C76 together coordinate [4Fe-4S] cluster. Residues 152 to 344 (RISRELHDSV…GTNVTLNIPI (193 aa)) form the Histidine kinase domain. Position 158 is a phosphohistidine; by autocatalysis (H158).

It depends on [4Fe-4S] cluster as a cofactor. Autophosphorylated.

The protein localises to the cytoplasm. The enzyme catalyses ATP + protein L-histidine = ADP + protein N-phospho-L-histidine.. Functionally, member of the two-component regulatory system NreB/NreC involved in the control of dissimilatory nitrate/nitrite reduction in response to oxygen. NreB functions as a direct oxygen sensor histidine kinase which is autophosphorylated, in the absence of oxygen, probably at the conserved histidine residue, and transfers its phosphate group probably to a conserved aspartate residue of NreC. NreB/NreC activates the expression of the nitrate (narGHJI) and nitrite (nir) reductase operons, as well as the putative nitrate transporter gene narT. The polypeptide is Oxygen sensor histidine kinase NreB (nreB) (Staphylococcus aureus (strain JH1)).